The primary structure comprises 422 residues: UDP-N-acetylglucosamine 1-carboxyvinyltransferase (422 aa).

A phosphoenolpyruvate-binding site is contributed by 22-23 (KN). Arg-92 is a UDP-N-acetyl-alpha-D-glucosamine binding site. Cys-116 serves as the catalytic Proton donor. 2-(S-cysteinyl)pyruvic acid O-phosphothioketal is present on Cys-116. Residues 121–125 (RPVDQ), Asp-307, and Ile-329 each bind UDP-N-acetyl-alpha-D-glucosamine.

This sequence belongs to the EPSP synthase family. MurA subfamily.

The protein localises to the cytoplasm. The enzyme catalyses phosphoenolpyruvate + UDP-N-acetyl-alpha-D-glucosamine = UDP-N-acetyl-3-O-(1-carboxyvinyl)-alpha-D-glucosamine + phosphate. It participates in cell wall biogenesis; peptidoglycan biosynthesis. Functionally, cell wall formation. Adds enolpyruvyl to UDP-N-acetylglucosamine. The polypeptide is UDP-N-acetylglucosamine 1-carboxyvinyltransferase (Psychrobacter arcticus (strain DSM 17307 / VKM B-2377 / 273-4)).